The following is a 121-amino-acid chain: MKEVIAIIRPKNMKKTRDVLESLGFPSFNATRVLGRGKQRAIIDEVTIPSPSPEIDEVRGTMRYIPKRMIQITVEDPDVQLVVEAIMKVNHTGKIGDGKIFVCPVDDAMRIRTGDRGTEAL.

Belongs to the P(II) protein family.

Functionally, could be involved in the regulation of nitrogen fixation. The polypeptide is Nitrogen fixation nifHD region GlnB-like protein 2 (glnBB) (Methanothermobacter marburgensis (strain ATCC BAA-927 / DSM 2133 / JCM 14651 / NBRC 100331 / OCM 82 / Marburg) (Methanobacterium thermoautotrophicum)).